The sequence spans 318 residues: Cytochrome c biogenesis protein CcsA (318 aa).

The next 8 helical transmembrane spans lie at 17–37, 45–65, 75–95, 104–124, 149–169, 224–244, 258–275, and 287–307; these read VLALGLAAFALLLLAIPISFW, SAVVTLLVALANLVLTAQLVL, ISNLYESLCFLAWACTLAQLL, IVSAAATPMALLCVAFASFAL, VIMCSYAALLVGSFLSMAVLF, TITVGFLLLTLGLISGAVWAN, TWALICWMVYAAYLHTRF, and VAVAGIVVIVVCYIGVNLLGI.

The protein belongs to the CcmF/CycK/Ccl1/NrfE/CcsA family. In terms of assembly, may interact with ccs1.

The protein resides in the cellular thylakoid membrane. Required during biogenesis of c-type cytochromes (cytochrome c6 and cytochrome f) at the step of heme attachment. This is Cytochrome c biogenesis protein CcsA from Prochlorococcus marinus (strain MIT 9313).